The chain runs to 215 residues: HTH-type transcriptional repressor FabR (215 aa).

Residues 10–70 (KTRRSLVEAA…TMVDESGLML (61 aa)) form the HTH tetR-type domain. A DNA-binding region (H-T-H motif) is located at residues 33–52 (SLREVAREAGIAPTSFYRHF).

Homodimer.

Its subcellular location is the cytoplasm. Its function is as follows. Represses the transcription of fabB, involved in unsaturated fatty acid (UFA) biosynthesis. By controlling UFA production, FabR directly influences the physical properties of the membrane bilayer. The sequence is that of HTH-type transcriptional repressor FabR from Escherichia coli O139:H28 (strain E24377A / ETEC).